We begin with the raw amino-acid sequence, 244 residues long: 5-oxoprolinase subunit A (244 aa).

The protein belongs to the LamB/PxpA family. Forms a complex composed of PxpA, PxpB and PxpC.

It carries out the reaction 5-oxo-L-proline + ATP + 2 H2O = L-glutamate + ADP + phosphate + H(+). In terms of biological role, catalyzes the cleavage of 5-oxoproline to form L-glutamate coupled to the hydrolysis of ATP to ADP and inorganic phosphate. This is 5-oxoprolinase subunit A from Escherichia coli O17:K52:H18 (strain UMN026 / ExPEC).